A 454-amino-acid polypeptide reads, in one-letter code: Toluate 1,2-dioxygenase subunit alpha (454 aa).

The 98-residue stretch at 51 to 148 (IYLAHESQIP…SFDCDGSHDL (98 aa)) folds into the Rieske domain. [2Fe-2S] cluster-binding residues include Cys-92, His-94, Cys-112, and His-115. Residues His-221 and His-226 each coordinate Fe cation.

It belongs to the bacterial ring-hydroxylating dioxygenase alpha subunit family. This dioxygenase system consists of three proteins: the two subunits of the hydroxylase component (XylX and XylY), and an electron transfer component (XylZ). It depends on [2Fe-2S] cluster as a cofactor. The cofactor is Fe cation.

It functions in the pathway xenobiotic degradation; toluene degradation. This chain is Toluate 1,2-dioxygenase subunit alpha (xylX), found in Pseudomonas putida (Arthrobacter siderocapsulatus).